The following is a 442-amino-acid chain: Membrane sensor protein UhpC (442 aa).

Topologically, residues 1 to 30 (MLSFLKAPANAPLITDKHEVDARYRYWRRH) are cytoplasmic. Residues 31–51 (ILITIWLGYALFYFTRKSFNA) traverse the membrane as a helical segment. Over 52–66 (AAPEILASGILTRSD) the chain is Periplasmic. A helical transmembrane segment spans residues 67 to 87 (IGLLATLFYITYGVSKFVSGI). Residues 88–95 (VSDRSNAR) are Cytoplasmic-facing. The helical transmembrane segment at 96-118 (YFMGIGLIATGVVNILFGFSTSL) threads the bilayer. The Periplasmic segment spans residues 119-121 (WAF). Residues 122–144 (ALLWALNAFFQGFGSPVCARLLT) traverse the membrane as a helical segment. The Cytoplasmic segment spans residues 145–162 (AWYSRTERGGWWALWNTA). A helical membrane pass occupies residues 163-183 (HNVGGALIPLVMAAVALHYGW). Position 184 (Arg-184) is a topological domain, periplasmic. The chain crosses the membrane as a helical span at residues 185–205 (VGMMVAGLLAIGVGMVLCWRL). The Cytoplasmic portion of the chain corresponds to 206–244 (RDRPQAIGLPPVGDWRHDALEVAQQQEGAGLSRKEILAK). Residues 245-265 (YVLLNPYIWLLSLCYVLVYVV) traverse the membrane as a helical segment. Residues 266 to 289 (RAAINDWGNLYMSETLGVDLVTAN) are Periplasmic-facing. Residues 290–310 (TAVSMFELGGFIGALVAGWGS) form a helical membrane-spanning segment. The Cytoplasmic portion of the chain corresponds to 311–322 (DKLFNGNRGPMN). Residues 323 to 343 (LIFAAGILLSVGSLWLMPFAS) traverse the membrane as a helical segment. Residues 344-347 (YVMQ) are Periplasmic-facing. A helical membrane pass occupies residues 348 to 368 (AACFFTTGFFVFGPQMLIGMA). Over 369-379 (AAECSHKEAAG) the chain is Cytoplasmic. Residues 380–400 (AATGFVGLFAYLGASLSGWPL) form a helical membrane-spanning segment. The Periplasmic portion of the chain corresponds to 401–410 (AKVLEIWHWT). Residues 411 to 431 (GFFAVIAIAAGISALLLLPFL) form a helical membrane-spanning segment. The Cytoplasmic segment spans residues 432 to 442 (NAQAPRETHEA).

The protein belongs to the major facilitator superfamily. Organophosphate:Pi antiporter (OPA) (TC 2.A.1.4) family.

The protein resides in the cell inner membrane. In terms of biological role, part of the UhpABC signaling cascade that controls the expression of the hexose phosphate transporter UhpT. UhpC senses external glucose-6-phosphate and interacts with the histidine kinase UhpB, leading to the stimulation of the autokinase activity of UhpB. The chain is Membrane sensor protein UhpC (uhpC) from Salmonella typhimurium (strain LT2 / SGSC1412 / ATCC 700720).